Reading from the N-terminus, the 166-residue chain is MTESTSRRPAYARLLDRAVRILAVRDHSEQELRRKLAAPIMGKNGPEEIDATAEDYERVIAWCHEHGYLDDSRFVARFIASRSRKGYGPARIRQELNQKGISREATEKAMRECDIDWCALARDQVTRKYGEPLPTVFSEKVKIQRFLLYRGYLMEDIQDIWRNFAD.

Belongs to the RecX family.

It is found in the cytoplasm. Modulates RecA activity. In Escherichia coli (strain SE11), this protein is Regulatory protein RecX.